Here is a 310-residue protein sequence, read N- to C-terminus: Small ribosomal subunit biogenesis GTPase RsgA (310 aa).

The 162-residue stretch at 77–238 (LSKQSHILAA…IIDTPGIKGF (162 aa)) folds into the CP-type G domain. GTP contacts are provided by residues 126–129 (NKVD) and 180–188 (GHSGVGKST). Zn(2+)-binding residues include Cys-262, Cys-267, His-269, and Cys-275.

Belongs to the TRAFAC class YlqF/YawG GTPase family. RsgA subfamily. Monomer. Associates with 30S ribosomal subunit, binds 16S rRNA. Zn(2+) is required as a cofactor.

Its subcellular location is the cytoplasm. In terms of biological role, one of several proteins that assist in the late maturation steps of the functional core of the 30S ribosomal subunit. Helps release RbfA from mature subunits. May play a role in the assembly of ribosomal proteins into the subunit. Circularly permuted GTPase that catalyzes slow GTP hydrolysis, GTPase activity is stimulated by the 30S ribosomal subunit. This Bacteroides fragilis (strain ATCC 25285 / DSM 2151 / CCUG 4856 / JCM 11019 / LMG 10263 / NCTC 9343 / Onslow / VPI 2553 / EN-2) protein is Small ribosomal subunit biogenesis GTPase RsgA.